The chain runs to 472 residues: Adenosylhomocysteinase (472 aa).

Substrate-binding residues include Thr61, Asp136, and Glu196. Position 197-199 (Thr197–Thr199) interacts with NAD(+). The substrate site is built by Lys226 and Asp230. NAD(+) contacts are provided by residues Asn231, Gly260–Gly265, Glu283, Asn318, Ile339–His341, and Asn384.

It belongs to the adenosylhomocysteinase family. The cofactor is NAD(+).

The protein resides in the cytoplasm. The enzyme catalyses S-adenosyl-L-homocysteine + H2O = L-homocysteine + adenosine. The protein operates within amino-acid biosynthesis; L-homocysteine biosynthesis; L-homocysteine from S-adenosyl-L-homocysteine: step 1/1. In terms of biological role, may play a key role in the regulation of the intracellular concentration of adenosylhomocysteine. The polypeptide is Adenosylhomocysteinase (Cupriavidus metallidurans (strain ATCC 43123 / DSM 2839 / NBRC 102507 / CH34) (Ralstonia metallidurans)).